A 320-amino-acid polypeptide reads, in one-letter code: MARNKIALIGSGMIGGTLAHLAGLKELGDVVLFDIAEGIPQGKGLDIAESSPVDGFDAKYTGANDYAAIEGADVVIVTAGVPRKPGMSRDDLLGINLKVMEQVGAGIKKYAPEAFVICITNPLDAMVWALQKFSGLPAHKVVGMAGVLDSARFRYFLSEEFNVSVEDVTAFVLGGHGDSMVPLARYSTVAGIPLPDLVKMGWTSQDKLDKIIQRTRDGGAEIVGLLKTGSAFYAPAASAIQMAESYLKDKKRVLPVAAQLTGQYGVKDMYVGVPTVIGANGVERIIEIDLDKNEKAEFDKSVASVAGLCEACIGIAPSLK.

Residues 10–15 (GSGMIG) and D34 contribute to the NAD(+) site. 2 residues coordinate substrate: R83 and R89. Residues N96 and 119–121 (ITN) each bind NAD(+). Substrate contacts are provided by N121 and R152. Residue H176 is the Proton acceptor of the active site.

This sequence belongs to the LDH/MDH superfamily. MDH type 3 family.

It catalyses the reaction (S)-malate + NAD(+) = oxaloacetate + NADH + H(+). In terms of biological role, catalyzes the reversible oxidation of malate to oxaloacetate. The sequence is that of Malate dehydrogenase from Brucella anthropi (strain ATCC 49188 / DSM 6882 / CCUG 24695 / JCM 21032 / LMG 3331 / NBRC 15819 / NCTC 12168 / Alc 37) (Ochrobactrum anthropi).